A 622-amino-acid polypeptide reads, in one-letter code: Low affinity potassium transport system protein Kup (622 aa).

12 helical membrane passes run 9 to 29 (LPAVTLAAIGVVYGDIGTSPL), 52 to 72 (FLSLIFWLLILIVSLKYLLFV), 99 to 119 (TPVLVIIGLIGGSFFYGEVVI), 137 to 157 (PSLQEFIVPLSVVVLTLLFFI), 165 to 185 (VGKLFAPVMLLWFLTLGVLGV), 213 to 233 (VSFFALGAVVLAITGVEALYA), 247 to 267 (WFSAVLPSLVLNYFGQGALLL), 276 to 296 (PFFLLAPDWAMIPLLILATLA), 337 to 357 (IYIPFINWLLYIAVVLVIVSF), 363 to 383 (LAAAYGIAVTGTMVLTSILSC), 394 to 414 (LLIVSVLLLALLCLDVSMFAA), and 419 to 439 (IFSGGWLPLLLGFLMFIAMIT).

The protein belongs to the HAK/KUP transporter (TC 2.A.72) family.

Its subcellular location is the cell inner membrane. The enzyme catalyses K(+)(in) + H(+)(in) = K(+)(out) + H(+)(out). Functionally, responsible for the low-affinity transport of potassium into the cell. Likely operates as a K(+):H(+) symporter. The sequence is that of Low affinity potassium transport system protein Kup from Sodalis glossinidius (strain morsitans).